Here is an 87-residue protein sequence, read N- to C-terminus: U3-theraphotoxin-Hhn1a 5 (87 aa).

An N-terminal signal peptide occupies residues 1–24 (MVNMKASMFLTFAGLVLLFVVCYA). The propeptide occupies 25–52 (SESEEKEFPKEMLSSIFAVDNDFKQEER). 3 disulfide bridges follow: C54-C67, C61-C72, and C66-C79.

Belongs to the neurotoxin 10 (Hwtx-1) family. 51 (Hntx-8) subfamily. Hntx-8 sub-subfamily. As to expression, expressed by the venom gland.

The protein localises to the secreted. Ion channel inhibitor. The polypeptide is U3-theraphotoxin-Hhn1a 5 (Cyriopagopus hainanus (Chinese bird spider)).